The following is a 336-amino-acid chain: Dihydroorotate dehydrogenase (quinone) (336 aa).

Residues 62-66 (AGLDK) and Thr-86 each bind FMN. Lys-66 lines the substrate pocket. Residue 111–115 (NRMGF) coordinates substrate. Residues Asn-139 and Asn-172 each contribute to the FMN site. Residue Asn-172 coordinates substrate. Ser-175 (nucleophile) is an active-site residue. Asn-177 lines the substrate pocket. FMN-binding residues include Lys-217 and Thr-245. A substrate-binding site is contributed by 246-247 (NT). FMN is bound by residues Gly-268, Gly-297, and 318–319 (YS).

It belongs to the dihydroorotate dehydrogenase family. Type 2 subfamily. As to quaternary structure, monomer. It depends on FMN as a cofactor.

The protein localises to the cell membrane. It catalyses the reaction (S)-dihydroorotate + a quinone = orotate + a quinol. It functions in the pathway pyrimidine metabolism; UMP biosynthesis via de novo pathway; orotate from (S)-dihydroorotate (quinone route): step 1/1. Catalyzes the conversion of dihydroorotate to orotate with quinone as electron acceptor. This is Dihydroorotate dehydrogenase (quinone) from Aliivibrio fischeri (strain MJ11) (Vibrio fischeri).